A 133-amino-acid chain; its full sequence is Phosphoribosyl-AMP cyclohydrolase (133 aa).

D82 is a Mg(2+) binding site. A Zn(2+)-binding site is contributed by C83. D84 and D86 together coordinate Mg(2+). C99 and C106 together coordinate Zn(2+).

It belongs to the PRA-CH family. As to quaternary structure, homodimer. It depends on Mg(2+) as a cofactor. Requires Zn(2+) as cofactor.

It localises to the cytoplasm. The catalysed reaction is 1-(5-phospho-beta-D-ribosyl)-5'-AMP + H2O = 1-(5-phospho-beta-D-ribosyl)-5-[(5-phospho-beta-D-ribosylamino)methylideneamino]imidazole-4-carboxamide. The protein operates within amino-acid biosynthesis; L-histidine biosynthesis; L-histidine from 5-phospho-alpha-D-ribose 1-diphosphate: step 3/9. Its function is as follows. Catalyzes the hydrolysis of the adenine ring of phosphoribosyl-AMP. This chain is Phosphoribosyl-AMP cyclohydrolase, found in Rhodospirillum centenum (strain ATCC 51521 / SW).